Consider the following 680-residue polypeptide: MKSQNKYSIRKFSVGASSILIATLLFLSGGQAQAAEKQVNMGNSQEDTVTAQSIGDQQTRENANYQRENGVDEQQHTENLTKNLHNDKTISEENHRKTDDLNKDQLKDDKNSSLNNKNIQRDTTKNNNANPSDVNQGLEQAINDGKQSKVASQQQSKEVDNSQDSNANNNLPSQSLTKEAPSLNKSDQTSQREIVNETEIEKVQPQQNNQANDKITNHNFNNEQEVKPQKDEKTLSVSDLKNNQKSPVEPTKDNDKKNGLNLLKSSAVATLPNKGTKELTAKAKDDQTNKVAKQGQYKNQDPIVLVHGFNGFTDDINPSVLAHYWGGNKMNIRQDLEENGYKAYEASISAFGSNYDRAVELYYYIKGGRVDYGAAHAAKYGHERYGKTYEGIYKDWKPGQKVHLVGHSMGGQTIRQLEELLRNGNREEIEYQKKHGGEISPLFKGNNDNMISSITTLGTPHNGTHASDLAGNEALVRQIVFDIGKMFGNKNSRVDFGLAQWGLKQKPNESYIDYVKRVKQSNLWKSKDNGFYDLTREGATDLNRKTSLNPNIVYKTYTGEATHKALNSDRQKADLNMFFPFVITGNLIGKATEKEWRENDGLVSVISSQHPFNQAYTNATDKIQKGIWQVTPTKHDWDHVDFVGQDSSDTVRTREELQDFWHHLADDLVKTEKVTDTKQA.

Residues 1–34 (MKSQNKYSIRKFSVGASSILIATLLFLSGGQAQA) form the signal peptide. A propeptide spanning residues 35–290 (AEKQVNMGNS…AKAKDDQTNK (256 aa)) is cleaved from the precursor. A disordered region spans residues 82 to 259 (KNLHNDKTIS…PTKDNDKKNG (178 aa)). The span at 84-111 (LHNDKTISEENHRKTDDLNKDQLKDDKN) shows a compositional bias: basic and acidic residues. 3 stretches are compositionally biased toward polar residues: residues 125–138 (KNNNANPSDVNQGL), 162–193 (SQDSNANNNLPSQSLTKEAPSLNKSDQTSQRE), and 204–223 (QPQQNNQANDKITNHNFNNE). The span at 224 to 234 (QEVKPQKDEKT) shows a compositional bias: basic and acidic residues. The segment covering 235 to 246 (LSVSDLKNNQKS) has biased composition (polar residues). The active-site Nucleophile is S408. D600 functions as the Charge relay system in the catalytic mechanism. D638 is a Ca(2+) binding site. H639 acts as the Charge relay system in catalysis. Ca(2+)-binding residues include D641, D646, and D649.

It belongs to the AB hydrolase superfamily. Lipase family.

It localises to the secreted. It carries out the reaction a triacylglycerol + H2O = a diacylglycerol + a fatty acid + H(+). The protein is Lipase 1 (lip1) of Staphylococcus aureus (strain Mu50 / ATCC 700699).